Consider the following 361-residue polypeptide: Ataxin-3 (361 aa).

A Peptide (Met-Gly) (interchain with G-Cter in ubiquitin) cross-link involves residue Met1. Residues 1–180 (MESIFHEKQE…DCEADQLLQM (180 aa)) enclose the Josephin domain. Cys14 serves as the catalytic Nucleophile. His119 (proton acceptor) is an active-site residue. Asn134 is an active-site residue. A Glycyl lysine isopeptide (Lys-Gly) (interchain with G-Cter in ubiquitin) cross-link involves residue Lys200. Ser219 is subject to Phosphoserine. UIM domains are found at residues 224-243 (EDEE…IDME) and 244-263 (DEEA…SSRN). The segment covering 258–278 (QGSSRNISQDMTQTSGTNLTS) has biased composition (polar residues). The disordered stretch occupies residues 258 to 338 (QGSSRNISQD…DLGDAMSEED (81 aa)). A phosphoserine mark is found at Ser265 and Ser272. The span at 279-293 (EELRKRREAYFEKQQ) shows a compositional bias: basic and acidic residues. A compositionally biased stretch (low complexity) spans 294 to 305 (QKQQQQQQQQQQ). The segment covering 306–325 (GDLSGQSSHPCERPATSSGA) has biased composition (polar residues). Ser328 is subject to Phosphoserine. A UIM 3 domain is found at 331–349 (GDAMSEEDMLQAAVTMSLE).

As to quaternary structure, interacts with STUB1/CHIP (when monoubiquitinated). Interacts with DNA repair proteins RAD23A and RAD23B. Interacts with BECN1 (via its poly-Gln domain). Interacts with PRKN, UBR2, VCP and tubulin. Short isoform 1 interacts with CASP7. Monoubiquitinated N-terminally by UBE2W, possibly leading to activate the deubiquitinating enzyme activity. In terms of tissue distribution, ubiquitous.

It localises to the nucleus matrix. The protein resides in the nucleus. Its subcellular location is the lysosome membrane. The enzyme catalyses Thiol-dependent hydrolysis of ester, thioester, amide, peptide and isopeptide bonds formed by the C-terminal Gly of ubiquitin (a 76-residue protein attached to proteins as an intracellular targeting signal).. Deubiquitinating enzyme involved in protein homeostasis maintenance, transcription, cytoskeleton regulation, myogenesis and degradation of misfolded chaperone substrates. Binds long polyubiquitin chains and trims them, while it has weak or no activity against chains of 4 or less ubiquitins. Involved in degradation of misfolded chaperone substrates via its interaction with STUB1/CHIP: recruited to monoubiquitinated STUB1/CHIP, and restricts the length of ubiquitin chain attached to STUB1/CHIP substrates and preventing further chain extension. Interacts with key regulators of transcription and represses transcription: acts as a histone-binding protein that regulates transcription. Acts as a negative regulator of mTORC1 signaling in response to amino acid deprivation by mediating deubiquitination of RHEB, thereby promoting RHEB inactivation by the TSC-TBC complex. Regulates autophagy via the deubiquitination of 'Lys-402' of BECN1 leading to the stabilization of BECN1. This chain is Ataxin-3, found in Homo sapiens (Human).